The sequence spans 85 residues: WAP four-disulfide core domain protein 12 (85 aa).

A signal peptide spans 1–21 (MWPNSILVLMTLLISSTLVTG). The region spanning 25 to 72 (KGEEKRVCPPDYVRCIRQDDPQCYSDNDCGDQEICCFWQCGFKCVLPV) is the WAP domain. 4 cysteine pairs are disulfide-bonded: Cys32-Cys60, Cys39-Cys64, Cys47-Cys59, and Cys53-Cys68.

In terms of tissue distribution, constitutively expressed in tongue.

The protein resides in the secreted. In terms of biological role, antibacterial protein which inhibits the growth of E.coli and S.aureus. Putative acid-stable proteinase inhibitor. In Mus musculus (Mouse), this protein is WAP four-disulfide core domain protein 12.